The chain runs to 555 residues: Membrane protein insertase YidC (555 aa).

The chain crosses the membrane as a helical span at residues 7–24; the sequence is ILWVIFSMSLVLLYDNWQ. Low complexity-rich tracts occupy residues 40 to 54 and 64 to 81; these read QQAAPAGAGGATPQA and AAPGTVPAAPQAAAQPVG. The tract at residues 40–81 is disordered; sequence QQAAPAGAGGATPQADVPKANATNAAPGTVPAAPQAAAQPVG. 5 helical membrane-spanning segments follow: residues 334 to 354, 360 to 380, 430 to 450, 468 to 488, and 503 to 523; these read LELVKDYGWLTILAKPLFWLL, FLGNWGWSIIGLTVLIKLVFF, LGGCLPIVIQIPVFIALYWVL, LSVPDPFYILPIVMAVSMFVQ, and VMMIMPLVFSFMFFFFPAGLV.

This sequence belongs to the OXA1/ALB3/YidC family. Type 1 subfamily. As to quaternary structure, interacts with the Sec translocase complex via SecD. Specifically interacts with transmembrane segments of nascent integral membrane proteins during membrane integration.

It localises to the cell inner membrane. Its function is as follows. Required for the insertion and/or proper folding and/or complex formation of integral membrane proteins into the membrane. Involved in integration of membrane proteins that insert both dependently and independently of the Sec translocase complex, as well as at least some lipoproteins. Aids folding of multispanning membrane proteins. The chain is Membrane protein insertase YidC from Cupriavidus metallidurans (strain ATCC 43123 / DSM 2839 / NBRC 102507 / CH34) (Ralstonia metallidurans).